Here is a 247-residue protein sequence, read N- to C-terminus: Segregation and condensation protein A (247 aa).

This sequence belongs to the ScpA family. Component of a cohesin-like complex composed of ScpA, ScpB and the Smc homodimer, in which ScpA and ScpB bind to the head domain of Smc. The presence of the three proteins is required for the association of the complex with DNA.

Its subcellular location is the cytoplasm. Its function is as follows. Participates in chromosomal partition during cell division. May act via the formation of a condensin-like complex containing Smc and ScpB that pull DNA away from mid-cell into both cell halves. This is Segregation and condensation protein A from Mycoplasma mobile (strain ATCC 43663 / 163K / NCTC 11711) (Mesomycoplasma mobile).